Consider the following 335-residue polypeptide: MSGPALKVAITQAQPKWLDLAGSVEKTVNLIAEAAKGDARLVAFPECWIPGYPGWIWQRPVDPIINTKYIQNSLSVNSAEMNTIKSAAKENNIAVVLGFVEAIDTHSVYIAQAIISPKGELLMHRRKIKPTHMERTVFGDGSGSDLTNVADVDFGGDIGVVKVGTLACWEHALPLLKYHTYSQKEAIHIAMWPPIDPHPGVDAPALWSMSAEGCQNLSQTHAIEGGAYVLHCTAVCNEEGIEGMKTKGGLLFQEPGGGHSAAIAPDGRRLTKPLADGNPAAEGIVYADLDMARVVMNKGFIDVVGHYSRPDLLWLGVDKAQKGCVVPKREPEQDV.

A CN hydrolase domain is found at 6 to 291; sequence LKVAITQAQP…EGIVYADLDM (286 aa). The active-site Proton acceptor is the Glu-46. Lys-127 is a catalytic residue. Residue Cys-168 is the Nucleophile of the active site.

The protein belongs to the carbon-nitrogen hydrolase superfamily. Nitrilase family.

It carries out the reaction a nitrile + 2 H2O = a carboxylate + NH4(+). The enzyme catalyses 4-chlorophenylacetonitrile + 2 H2O = 4-chlorophenylacetate + NH4(+). Its function is as follows. Nitrilase that hydrolyzes preferentially phenylacetonitrile, (R,S)-mandelonitrile, and 3-indolylacetonitrile. This Arthroderma benhamiae (strain ATCC MYA-4681 / CBS 112371) (Trichophyton mentagrophytes) protein is Arylacetonitrilase.